Here is an 881-residue protein sequence, read N- to C-terminus: Alanine--tRNA ligase (881 aa).

Zn(2+) is bound by residues His-563, His-567, Cys-672, and His-676.

Belongs to the class-II aminoacyl-tRNA synthetase family. The cofactor is Zn(2+).

It localises to the cytoplasm. It carries out the reaction tRNA(Ala) + L-alanine + ATP = L-alanyl-tRNA(Ala) + AMP + diphosphate. Its function is as follows. Catalyzes the attachment of alanine to tRNA(Ala) in a two-step reaction: alanine is first activated by ATP to form Ala-AMP and then transferred to the acceptor end of tRNA(Ala). Also edits incorrectly charged Ser-tRNA(Ala) and Gly-tRNA(Ala) via its editing domain. The protein is Alanine--tRNA ligase of Azorhizobium caulinodans (strain ATCC 43989 / DSM 5975 / JCM 20966 / LMG 6465 / NBRC 14845 / NCIMB 13405 / ORS 571).